Reading from the N-terminus, the 172-residue chain is Acetolactate synthase small subunit (172 aa).

An ACT domain is found at 4–79; the sequence is IITLTVVNRS…DVLKVTDITN (76 aa).

This sequence belongs to the acetolactate synthase small subunit family. In terms of assembly, dimer of large and small chains.

The enzyme catalyses 2 pyruvate + H(+) = (2S)-2-acetolactate + CO2. Its pathway is amino-acid biosynthesis; L-isoleucine biosynthesis; L-isoleucine from 2-oxobutanoate: step 1/4. It participates in amino-acid biosynthesis; L-valine biosynthesis; L-valine from pyruvate: step 1/4. The protein is Acetolactate synthase small subunit (ilvH) of Bacillus subtilis (strain 168).